We begin with the raw amino-acid sequence, 43 residues long: Thymosin beta-b (43 aa).

Composition is skewed to basic and acidic residues over residues 1 to 25 (MADK…ETQE) and 33 to 43 (ETIEQEKQCEA). A disordered region spans residues 1 to 43 (MADKPDISEVSQFDKTKLKKTETQEKNTLPTKETIEQEKQCEA).

This sequence belongs to the thymosin beta family.

The protein localises to the cytoplasm. Its subcellular location is the cytoskeleton. Functionally, plays an important role in the organization of the cytoskeleton. Binds to and sequesters actin monomers (G actin) and therefore inhibits actin polymerization. This is Thymosin beta-b from Cyprinus carpio (Common carp).